A 458-amino-acid polypeptide reads, in one-letter code: tRNA modification GTPase MnmE (458 aa).

Positions 22, 84, and 123 each coordinate (6S)-5-formyl-5,6,7,8-tetrahydrofolate. The 160-residue stretch at 220 to 379 (GIATAIIGRP…LEKAIADLFF (160 aa)) folds into the TrmE-type G domain. Residue Asn-230 participates in K(+) binding. GTP is bound by residues 230–235 (NVGKSS), 249–255 (TDIAGTT), and 274–277 (DTAG). Ser-234 provides a ligand contact to Mg(2+). K(+) contacts are provided by Thr-249, Ile-251, and Thr-254. Mg(2+) is bound at residue Thr-255. Lys-458 is a (6S)-5-formyl-5,6,7,8-tetrahydrofolate binding site.

Belongs to the TRAFAC class TrmE-Era-EngA-EngB-Septin-like GTPase superfamily. TrmE GTPase family. Homodimer. Heterotetramer of two MnmE and two MnmG subunits. K(+) is required as a cofactor.

It localises to the cytoplasm. Exhibits a very high intrinsic GTPase hydrolysis rate. Involved in the addition of a carboxymethylaminomethyl (cmnm) group at the wobble position (U34) of certain tRNAs, forming tRNA-cmnm(5)s(2)U34. This is tRNA modification GTPase MnmE from Bacillus anthracis.